A 791-amino-acid chain; its full sequence is RAS guanyl-releasing protein 1 (791 aa).

An N-terminal Ras-GEF domain is found at Leu49–Ser172. A ras exchanger motif region; required for transforming activity region spans residues Ser53 to Tyr106. A Ras-GEF domain is found at Glu201 to Arg432. 2 consecutive EF-hand domains span residues His466–Ser501 and Phe502–Ile528. Residues Asp479, Asp481, Asp483, Tyr485, Glu490, Asp506, Asp508, Glu510, and Glu517 each contribute to the Ca(2+) site. Residues Leu537–Cys587 form a Phorbol-ester/DAG-type zinc finger. The interval Thr671 to Arg715 is disordered. A compositionally biased stretch (polar residues) spans Gln672–Cys681. The span at Ser702–Val712 shows a compositional bias: pro residues. The stretch at Ile728 to Asp783 forms a coiled coil.

It belongs to the RASGRP family.

The protein localises to the cytoplasm. Its subcellular location is the cytosol. It localises to the cell membrane. The protein resides in the golgi apparatus membrane. It is found in the endoplasmic reticulum membrane. With respect to regulation, regulated by F-actin polymerization and probably by calcium. Its function is as follows. Functions as a diacylglycerol (DAG)-regulated nucleotide exchange factor specifically activating Ras through the exchange of bound GDP for GTP. This chain is RAS guanyl-releasing protein 1 (rasgrp1), found in Xenopus laevis (African clawed frog).